The sequence spans 315 residues: Olfactory receptor 4E1 (315 aa).

The Extracellular portion of the chain corresponds to methionine 1 to serine 33. Asparagine 8 is a glycosylation site (N-linked (GlcNAc...) asparagine). The helical transmembrane segment at methionine 34 to isoleucine 54 threads the bilayer. The Cytoplasmic segment spans residues tyrosine 55–threonine 61. The helical transmembrane segment at proline 62 to valine 82 threads the bilayer. At proline 83–cysteine 101 the chain is on the extracellular side. A disulfide bridge connects residues cysteine 101 and cysteine 183. A helical transmembrane segment spans residues valine 102–methionine 122. At alanine 123 to lysine 143 the chain is on the cytoplasmic side. Residues valine 144–threonine 164 traverse the membrane as a helical segment. Residues serine 165–glycine 208 are Extracellular-facing. A helical transmembrane segment spans residues leucine 209–leucine 229. Residues arginine 230–alanine 240 lie on the Cytoplasmic side of the membrane. The helical transmembrane segment at leucine 241 to isoleucine 261 threads the bilayer. Topologically, residues tyrosine 262–aspartate 272 are extracellular. A helical transmembrane segment spans residues lysine 273–leucine 293. The Cytoplasmic segment spans residues arginine 294 to lysine 315.

The protein belongs to the G-protein coupled receptor 1 family.

The protein localises to the cell membrane. Functionally, odorant receptor. This chain is Olfactory receptor 4E1 (OR4E1), found in Homo sapiens (Human).